The primary structure comprises 696 residues: Spindle assembly checkpoint component MAD1 (696 aa).

Disordered regions lie at residues 1-22 and 394-415; these read MSTG…SINN and QIHA…TENK. The segment covering 402–413 has biased composition (basic and acidic residues); it reads KQQEQEKEENTE.

Belongs to the MAD1 family. In terms of assembly, component of the mitotic checkpoint complex (MCC).

It localises to the nucleus. Central component of the spindle assembly checkpoint which is a feedback control that prevents cells with incompletely assembled spindles from leaving mitosis. The polypeptide is Spindle assembly checkpoint component MAD1 (Candida albicans (strain SC5314 / ATCC MYA-2876) (Yeast)).